Here is an 83-residue protein sequence, read N- to C-terminus: UPF0248 protein TGAM_1209 (83 aa).

Belongs to the UPF0248 family.

The sequence is that of UPF0248 protein TGAM_1209 from Thermococcus gammatolerans (strain DSM 15229 / JCM 11827 / EJ3).